A 412-amino-acid polypeptide reads, in one-letter code: Lipoyl synthase, mitochondrial (412 aa).

A mitochondrion-targeting transit peptide spans Met1–Phe28. The [4Fe-4S] cluster site is built by Cys124, Cys129, Cys135, Cys155, Cys159, Cys162, and Ser372. The Radical SAM core domain maps to Gly138 to Leu361.

This sequence belongs to the radical SAM superfamily. Lipoyl synthase family. Requires [4Fe-4S] cluster as cofactor.

The protein localises to the mitochondrion. It catalyses the reaction [[Fe-S] cluster scaffold protein carrying a second [4Fe-4S](2+) cluster] + N(6)-octanoyl-L-lysyl-[protein] + 2 oxidized [2Fe-2S]-[ferredoxin] + 2 S-adenosyl-L-methionine + 4 H(+) = [[Fe-S] cluster scaffold protein] + N(6)-[(R)-dihydrolipoyl]-L-lysyl-[protein] + 4 Fe(3+) + 2 hydrogen sulfide + 2 5'-deoxyadenosine + 2 L-methionine + 2 reduced [2Fe-2S]-[ferredoxin]. It functions in the pathway protein modification; protein lipoylation via endogenous pathway; protein N(6)-(lipoyl)lysine from octanoyl-[acyl-carrier-protein]: step 2/2. Functionally, catalyzes the radical-mediated insertion of two sulfur atoms into the C-6 and C-8 positions of the octanoyl moiety bound to the lipoyl domains of lipoate-dependent enzymes, thereby converting the octanoylated domains into lipoylated derivatives. In Fusarium vanettenii (strain ATCC MYA-4622 / CBS 123669 / FGSC 9596 / NRRL 45880 / 77-13-4) (Fusarium solani subsp. pisi), this protein is Lipoyl synthase, mitochondrial.